A 165-amino-acid polypeptide reads, in one-letter code: MKTMKKYIKTAFFCSMYWLIVQLNIANLGTRIPDKYFRQKHIIFKSFNFEKHGKFWNKWFYVRKWKHKILDGHQLNRNIYDQRHLMTINSDEIEKMIIETKRAELIHWISILPVIIFNKGPRLVKYINIFYAMIANVPIIIVQRYNRPRLTQLLRILKRRGERHD.

Positions 1-28 are cleaved as a signal peptide; sequence MKTMKKYIKTAFFCSMYWLIVQLNIANL. The helical transmembrane segment at 126 to 145 threads the bilayer; that stretch reads YINIFYAMIANVPIIIVQRY.

It belongs to the acyltransferase CrtO family.

It is found in the cell membrane. Its pathway is carotenoid biosynthesis; staphyloxanthin biosynthesis; staphyloxanthin from farnesyl diphosphate: step 5/5. In terms of biological role, catalyzes the acylation of glycosyl-4,4'-diaponeurosporenoate, i.e. the esterification of glucose at the C6'' position with the carboxyl group of the C(15) fatty acid 12-methyltetradecanoic acid, to yield staphyloxanthin. This is the last step in the biosynthesis of this orange pigment, present in most staphylococci strains. The protein is Glycosyl-4,4'-diaponeurosporenoate acyltransferase (crtO) of Staphylococcus aureus (strain bovine RF122 / ET3-1).